The sequence spans 124 residues: Small ribosomal subunit protein uS12 (124 aa).

The tract at residues 1–32 (MPTIQQLVRKGRQAKTTKTKTPALKGSPQRRG) is disordered. The segment covering 9-18 (RKGRQAKTTK) has biased composition (basic residues). Aspartate 89 is modified (3-methylthioaspartic acid). A disordered region spans residues 105-124 (QGVRNRKQARSRYGAKKEKS). Residues 108–118 (RNRKQARSRYG) show a composition bias toward basic residues.

Belongs to the universal ribosomal protein uS12 family. Part of the 30S ribosomal subunit. Contacts proteins S8 and S17. May interact with IF1 in the 30S initiation complex.

Functionally, with S4 and S5 plays an important role in translational accuracy. Its function is as follows. Interacts with and stabilizes bases of the 16S rRNA that are involved in tRNA selection in the A site and with the mRNA backbone. Located at the interface of the 30S and 50S subunits, it traverses the body of the 30S subunit contacting proteins on the other side and probably holding the rRNA structure together. The combined cluster of proteins S8, S12 and S17 appears to hold together the shoulder and platform of the 30S subunit. In Salinispora arenicola (strain CNS-205), this protein is Small ribosomal subunit protein uS12.